The chain runs to 211 residues: Arginine exporter protein ArgO (211 aa).

The next 6 helical transmembrane spans lie at 1–21 (MISYYFQGFALGAAMILPLGP), 37–57 (LMIALLCALSDLVLISAGIFG), 68–88 (LLALVTWGGVAFLLWYGFGAL), 111–131 (IIATMLAVTWLNPHVYLDTFV), 147–167 (WFALGTISASFLWFFGLALLA), and 179–199 (AQRIINILVGVVMWLIAFQLA).

It belongs to the LysE/ArgO transporter (TC 2.A.75) family.

The protein localises to the cell inner membrane. It catalyses the reaction L-arginine(in) = L-arginine(out). Its function is as follows. Involved in the export of arginine. Important to control the intracellular level of arginine and the correct balance between arginine and lysine. This chain is Arginine exporter protein ArgO, found in Salmonella newport (strain SL254).